The following is a 440-amino-acid chain: tRNA-2-methylthio-N(6)-dimethylallyladenosine synthase (440 aa).

Positions 4 to 122 (KSYYIITHGC…LPKILERVFE (119 aa)) constitute an MTTase N-terminal domain. Residues Cys-13, Cys-49, Cys-83, Cys-159, Cys-163, and Cys-166 each coordinate [4Fe-4S] cluster. The Radical SAM core domain occupies 145-375 (REPGVRAWVT…IELQNGISLE (231 aa)). Residues 378 to 440 (KNEEGNIHEI…KLFHLEGVLV (63 aa)) form the TRAM domain.

Belongs to the methylthiotransferase family. MiaB subfamily. Monomer. [4Fe-4S] cluster serves as cofactor.

The protein resides in the cytoplasm. It carries out the reaction N(6)-dimethylallyladenosine(37) in tRNA + (sulfur carrier)-SH + AH2 + 2 S-adenosyl-L-methionine = 2-methylsulfanyl-N(6)-dimethylallyladenosine(37) in tRNA + (sulfur carrier)-H + 5'-deoxyadenosine + L-methionine + A + S-adenosyl-L-homocysteine + 2 H(+). Functionally, catalyzes the methylthiolation of N6-(dimethylallyl)adenosine (i(6)A), leading to the formation of 2-methylthio-N6-(dimethylallyl)adenosine (ms(2)i(6)A) at position 37 in tRNAs that read codons beginning with uridine. The chain is tRNA-2-methylthio-N(6)-dimethylallyladenosine synthase from Carboxydothermus hydrogenoformans (strain ATCC BAA-161 / DSM 6008 / Z-2901).